A 78-amino-acid chain; its full sequence is D-alanyl carrier protein (78 aa).

The Carrier domain maps to 1-78 (MEFREQVLNL…KIVEALEELR (78 aa)). The residue at position 36 (S36) is an O-(pantetheine 4'-phosphoryl)serine.

This sequence belongs to the DltC family. Post-translationally, 4'-phosphopantetheine is transferred from CoA to a specific serine of apo-DCP.

The protein resides in the cytoplasm. It participates in cell wall biogenesis; lipoteichoic acid biosynthesis. In terms of biological role, carrier protein involved in the D-alanylation of lipoteichoic acid (LTA). The loading of thioester-linked D-alanine onto DltC is catalyzed by D-alanine--D-alanyl carrier protein ligase DltA. The DltC-carried D-alanyl group is further transferred to cell membrane phosphatidylglycerol (PG) by forming an ester bond, probably catalyzed by DltD. D-alanylation of LTA plays an important role in modulating the properties of the cell wall in Gram-positive bacteria, influencing the net charge of the cell wall. In Staphylococcus aureus (strain Mu50 / ATCC 700699), this protein is D-alanyl carrier protein.